The chain runs to 340 residues: Mitochondrial glycine transporter (340 aa).

Solcar repeat units lie at residues Pro-23–Gly-108, Leu-128–Asp-218, and Arg-237–Ser-325. 6 helical membrane passes run Leu-29–Gln-54, Gly-83–Ile-109, Leu-134–Glu-159, Gly-193–Lys-216, Ile-241–Leu-267, and Gly-300–Ile-318.

This sequence belongs to the mitochondrial carrier (TC 2.A.29) family. SLC25A38 subfamily.

Its subcellular location is the mitochondrion inner membrane. The enzyme catalyses glycine(in) = glycine(out). Mitochondrial glycine transporter that imports glycine into the mitochondrial matrix. Plays an important role in providing glycine for the first enzymatic step in heme biosynthesis, the condensation of glycine with succinyl-CoA to produce 5-aminolevulinate (ALA) in the mitochondrial matrix. This chain is Mitochondrial glycine transporter, found in Debaryomyces hansenii (strain ATCC 36239 / CBS 767 / BCRC 21394 / JCM 1990 / NBRC 0083 / IGC 2968) (Yeast).